We begin with the raw amino-acid sequence, 155 residues long: Methylated-DNA--protein-cysteine methyltransferase (155 aa).

Catalysis depends on C119, which acts as the Nucleophile; methyl group acceptor.

Belongs to the MGMT family.

The protein resides in the cytoplasm. The enzyme catalyses a 6-O-methyl-2'-deoxyguanosine in DNA + L-cysteinyl-[protein] = S-methyl-L-cysteinyl-[protein] + a 2'-deoxyguanosine in DNA. It catalyses the reaction a 4-O-methyl-thymidine in DNA + L-cysteinyl-[protein] = a thymidine in DNA + S-methyl-L-cysteinyl-[protein]. Its function is as follows. Involved in the cellular defense against the biological effects of O6-methylguanine (O6-MeG) and O4-methylthymine (O4-MeT) in DNA. Repairs the methylated nucleobase in DNA by stoichiometrically transferring the methyl group to a cysteine residue in the enzyme. This is a suicide reaction: the enzyme is irreversibly inactivated. The protein is Methylated-DNA--protein-cysteine methyltransferase of Sulfolobus acidocaldarius (strain ATCC 33909 / DSM 639 / JCM 8929 / NBRC 15157 / NCIMB 11770).